The chain runs to 398 residues: 8-amino-7-oxononanoate synthase (398 aa).

Arginine 26 contacts substrate. 113-114 provides a ligand contact to pyridoxal 5'-phosphate; that stretch reads GF. Histidine 138 serves as a coordination point for substrate. Pyridoxal 5'-phosphate is bound by residues serine 181, histidine 209, and threonine 238. The residue at position 241 (lysine 241) is an N6-(pyridoxal phosphate)lysine. Threonine 355 contributes to the substrate binding site.

It belongs to the class-II pyridoxal-phosphate-dependent aminotransferase family. BioF subfamily. Homodimer. It depends on pyridoxal 5'-phosphate as a cofactor.

It catalyses the reaction 6-carboxyhexanoyl-[ACP] + L-alanine + H(+) = (8S)-8-amino-7-oxononanoate + holo-[ACP] + CO2. The protein operates within cofactor biosynthesis; biotin biosynthesis. Catalyzes the decarboxylative condensation of pimeloyl-[acyl-carrier protein] and L-alanine to produce 8-amino-7-oxononanoate (AON), [acyl-carrier protein], and carbon dioxide. The chain is 8-amino-7-oxononanoate synthase from Aeromonas hydrophila subsp. hydrophila (strain ATCC 7966 / DSM 30187 / BCRC 13018 / CCUG 14551 / JCM 1027 / KCTC 2358 / NCIMB 9240 / NCTC 8049).